The sequence spans 129 residues: Glycine cleavage system H protein (129 aa).

The 83-residue stretch at 24–106 (TYTVGITEHA…YVGGWIFKIK (83 aa)) folds into the Lipoyl-binding domain. Position 65 is an N6-lipoyllysine (Lys-65).

The protein belongs to the GcvH family. As to quaternary structure, the glycine cleavage system is composed of four proteins: P, T, L and H. (R)-lipoate is required as a cofactor.

The glycine cleavage system catalyzes the degradation of glycine. The H protein shuttles the methylamine group of glycine from the P protein to the T protein. This Salmonella paratyphi B (strain ATCC BAA-1250 / SPB7) protein is Glycine cleavage system H protein.